We begin with the raw amino-acid sequence, 416 residues long: Exodeoxyribonuclease 7 large subunit (416 aa).

It belongs to the XseA family. In terms of assembly, heterooligomer composed of large and small subunits.

It localises to the cytoplasm. It carries out the reaction Exonucleolytic cleavage in either 5'- to 3'- or 3'- to 5'-direction to yield nucleoside 5'-phosphates.. In terms of biological role, bidirectionally degrades single-stranded DNA into large acid-insoluble oligonucleotides, which are then degraded further into small acid-soluble oligonucleotides. The sequence is that of Exodeoxyribonuclease 7 large subunit from Sulfurimonas denitrificans (strain ATCC 33889 / DSM 1251) (Thiomicrospira denitrificans (strain ATCC 33889 / DSM 1251)).